The following is a 128-amino-acid chain: Serum amyloid A-4 protein (128 aa).

Positions 1 to 18 (MKLFIGLIFCSLVMGVSS) are cleaved as a signal peptide. The segment at 93 to 128 (SSEREEDQVSNRRAEEWGRSGQDPDHFRPAGLPKKY) is disordered. A compositionally biased stretch (basic and acidic residues) spans 99–120 (DQVSNRRAEEWGRSGQDPDHFR).

This sequence belongs to the SAA family. Apolipoprotein of the HDL complex.

It is found in the secreted. Major acute phase reactant. This chain is Serum amyloid A-4 protein, found in Sus scrofa (Pig).